The chain runs to 220 residues: Ribosomal RNA large subunit methyltransferase E (220 aa).

S-adenosyl-L-methionine contacts are provided by G60, W62, D92, D108, and D133. Residue K173 is the Proton acceptor of the active site.

It belongs to the class I-like SAM-binding methyltransferase superfamily. RNA methyltransferase RlmE family.

It is found in the cytoplasm. The enzyme catalyses uridine(2552) in 23S rRNA + S-adenosyl-L-methionine = 2'-O-methyluridine(2552) in 23S rRNA + S-adenosyl-L-homocysteine + H(+). Specifically methylates the uridine in position 2552 of 23S rRNA at the 2'-O position of the ribose in the fully assembled 50S ribosomal subunit. This is Ribosomal RNA large subunit methyltransferase E from Burkholderia multivorans (strain ATCC 17616 / 249).